Here is a 253-residue protein sequence, read N- to C-terminus: 2,3-bisphosphoglycerate-dependent phosphoglycerate mutase (253 aa).

Substrate-binding positions include arginine 12–asparagine 19, threonine 25–glycine 26, arginine 64, glutamate 91–tyrosine 94, lysine 102, arginine 118–arginine 119, and glycine 187–asparagine 188. The Tele-phosphohistidine intermediate role is filled by histidine 13. Glutamate 91 acts as the Proton donor/acceptor in catalysis.

It belongs to the phosphoglycerate mutase family. BPG-dependent PGAM subfamily.

The catalysed reaction is (2R)-2-phosphoglycerate = (2R)-3-phosphoglycerate. Its pathway is carbohydrate degradation; glycolysis; pyruvate from D-glyceraldehyde 3-phosphate: step 3/5. Functionally, catalyzes the interconversion of 2-phosphoglycerate and 3-phosphoglycerate. The sequence is that of 2,3-bisphosphoglycerate-dependent phosphoglycerate mutase from Streptomyces griseus subsp. griseus (strain JCM 4626 / CBS 651.72 / NBRC 13350 / KCC S-0626 / ISP 5235).